The sequence spans 429 residues: uncharacterized protein (429 aa).

Positions 1–12 (MSDSKEDIRNGQ) are enriched in basic and acidic residues. Disordered stretches follow at residues 1 to 63 (MSDS…APEA), 257 to 306 (RSRA…SDRM), and 320 to 429 (YRGY…SDSE). A compositionally biased stretch (acidic residues) spans 328–362 (EENEEDDLGDFIAEEEEEEEQEEEQEEDEEDEEEV). A compositionally biased stretch (basic and acidic residues) spans 369–378 (KGFDADKEAS).

It belongs to the LEO1 family.

Its subcellular location is the nucleus. This is an uncharacterized protein from Schizosaccharomyces pombe (strain 972 / ATCC 24843) (Fission yeast).